The chain runs to 310 residues: Ribose-phosphate pyrophosphokinase (310 aa).

Residues 34 to 36 (DGE) and 93 to 94 (RQ) each bind ATP. Residues His-127 and Asp-167 each contribute to the Mg(2+) site. The active site involves Lys-190. Residues Arg-192, Asp-216, and 220–224 (DSGGT) contribute to the D-ribose 5-phosphate site.

It belongs to the ribose-phosphate pyrophosphokinase family. Class I subfamily. In terms of assembly, homohexamer. It depends on Mg(2+) as a cofactor.

The protein localises to the cytoplasm. It catalyses the reaction D-ribose 5-phosphate + ATP = 5-phospho-alpha-D-ribose 1-diphosphate + AMP + H(+). The protein operates within metabolic intermediate biosynthesis; 5-phospho-alpha-D-ribose 1-diphosphate biosynthesis; 5-phospho-alpha-D-ribose 1-diphosphate from D-ribose 5-phosphate (route I): step 1/1. In terms of biological role, involved in the biosynthesis of the central metabolite phospho-alpha-D-ribosyl-1-pyrophosphate (PRPP) via the transfer of pyrophosphoryl group from ATP to 1-hydroxyl of ribose-5-phosphate (Rib-5-P). The sequence is that of Ribose-phosphate pyrophosphokinase from Maricaulis maris (strain MCS10) (Caulobacter maris).